Consider the following 327-residue polypeptide: Interleukin-12 subunit beta (327 aa).

An N-terminal signal peptide occupies residues 1–22 (MHPQQLVVSWFSLVLLASPIVA). Residues 23–106 (IWELEKNVYV…LSRSLLLLHK (84 aa)) enclose the Ig-like C2-type domain. A disulfide bond links Cys50 and Cys90. A glycan (N-linked (GlcNAc...) asparagine) is linked at Asn223. The region spanning 238-327 (PPKNLQLRPL…WSEWASVSCS (90 aa)) is the Fibronectin type-III domain.

This sequence belongs to the IL-12B family. As to quaternary structure, heterodimer with IL12A; disulfide-linked. The heterodimer is known as interleukin IL-12. Heterodimer with IL23A; disulfide-linked. The heterodimer is known as interleukin IL-23. Also secreted as a monomer. Interacts with NBR1; this interaction promotes IL-12 secretion.

It localises to the secreted. Cytokine that can act as a growth factor for activated T and NK cells, enhance the lytic activity of NK/lymphokine-activated killer cells, and stimulate the production of IFN-gamma by resting PBMC. Its function is as follows. Associates with IL23A to form the IL-23 interleukin, a heterodimeric cytokine which functions in innate and adaptive immunity. IL-23 may constitute with IL-17 an acute response to infection in peripheral tissues. IL-23 binds to a heterodimeric receptor complex composed of IL12RB1 and IL23R, activates the Jak-Stat signaling cascade, stimulates memory rather than naive T-cells and promotes production of pro-inflammatory cytokines. IL-23 induces autoimmune inflammation and thus may be responsible for autoimmune inflammatory diseases and may be important for tumorigenesis. This chain is Interleukin-12 subunit beta (IL12B), found in Capra hircus (Goat).